Reading from the N-terminus, the 1305-residue chain is Cyclin-G-associated kinase (1305 aa).

Ser-2 bears the N-acetylserine mark. Ser-2 and Ser-16 each carry phosphoserine. Residues Leu-40–Glu-315 form the Protein kinase domain. Asp-173 (proton acceptor) is an active-site residue. The tract at residues Leu-332–Val-354 is disordered. One can recognise a Phosphatase tensin-type domain in the interval Ser-397–Glu-564. Residue Ser-454 is modified to Phosphoserine. The C2 tensin-type domain occupies Ser-570–Glu-708. Positions Phe-747–Gln-856 are disordered. Ser-768 is modified (phosphoserine). Position 774 is a phosphothreonine (Thr-774). Polar residues predominate over residues Ser-776–Phe-789. Ser-781 bears the Phosphoserine mark. A Phosphothreonine modification is found at Thr-792. The span at Val-805–Leu-817 shows a compositional bias: polar residues. Phosphoserine is present on residues Ser-809, Ser-824, and Ser-827. Residues Asp-822–Ala-832 show a composition bias toward acidic residues. Positions Ser-836 to Pro-848 are enriched in basic and acidic residues. Ser-938 is subject to Phosphoserine. A disordered region spans residues Leu-1044–Ser-1141. The segment covering Val-1105–Pro-1131 has biased composition (polar residues). An Omega-N-methylarginine modification is found at Arg-1122. Ser-1171 bears the Phosphoserine mark. Residues Ser-1241 to Phe-1305 enclose the J domain.

It belongs to the protein kinase superfamily. Ser/Thr protein kinase family.

Its subcellular location is the cytoplasm. The protein localises to the perinuclear region. It localises to the golgi apparatus. The protein resides in the trans-Golgi network. It is found in the cell junction. Its subcellular location is the focal adhesion. The protein localises to the cytoplasmic vesicle. It localises to the clathrin-coated vesicle. It catalyses the reaction L-seryl-[protein] + ATP = O-phospho-L-seryl-[protein] + ADP + H(+). It carries out the reaction L-threonyl-[protein] + ATP = O-phospho-L-threonyl-[protein] + ADP + H(+). Functionally, associates with cyclin G and CDK5. Seems to act as an auxilin homolog that is involved in the uncoating of clathrin-coated vesicles by Hsc70 in non-neuronal cells. Expression oscillates slightly during the cell cycle, peaking at G1. May play a role in clathrin-mediated endocytosis and intracellular trafficking, and in the dynamics of clathrin assembly/disassembly. This is Cyclin-G-associated kinase from Rattus norvegicus (Rat).